We begin with the raw amino-acid sequence, 191 residues long: Auxin-responsive protein IAA32 (191 aa).

The short motif at 32-36 (LGLSL) is the EAR-like (transcriptional repression) element. Residues 98 to 184 (YAYVKVNLDG…SVDRMRIARR (87 aa)) enclose the PB1 domain.

This sequence belongs to the Aux/IAA family. Homodimers and heterodimers.

The protein resides in the nucleus. Aux/IAA proteins are short-lived transcriptional factors that function as repressors of early auxin response genes at low auxin concentrations. Repression is thought to result from the interaction with auxin response factors (ARFs), proteins that bind to the auxin-responsive promoter element (AuxRE). Formation of heterodimers with ARF proteins may alter their ability to modulate early auxin response genes expression. The chain is Auxin-responsive protein IAA32 from Arabidopsis thaliana (Mouse-ear cress).